The following is a 416-amino-acid chain: 5-methylthioadenosine/S-adenosylhomocysteine deaminase 2 (416 aa).

Zn(2+) is bound by residues H58 and H60. 2 residues coordinate substrate: E86 and H178. Residue H205 participates in Zn(2+) binding. Positions 208 and 293 each coordinate substrate. Residue D293 coordinates Zn(2+).

Belongs to the metallo-dependent hydrolases superfamily. MTA/SAH deaminase family. Zn(2+) is required as a cofactor.

The enzyme catalyses S-adenosyl-L-homocysteine + H2O + H(+) = S-inosyl-L-homocysteine + NH4(+). It carries out the reaction S-methyl-5'-thioadenosine + H2O + H(+) = S-methyl-5'-thioinosine + NH4(+). Functionally, catalyzes the deamination of 5-methylthioadenosine and S-adenosyl-L-homocysteine into 5-methylthioinosine and S-inosyl-L-homocysteine, respectively. Is also able to deaminate adenosine. The polypeptide is 5-methylthioadenosine/S-adenosylhomocysteine deaminase 2 (Archaeoglobus fulgidus (strain ATCC 49558 / DSM 4304 / JCM 9628 / NBRC 100126 / VC-16)).